We begin with the raw amino-acid sequence, 313 residues long: Cilia- and flagella-associated protein 36 (313 aa).

Phosphoserine is present on residues Ser-85 and Ser-147. A coiled-coil region spans residues 147-187 (SDLEQEEMKILKEVLRKSKEEYDQEEERKRKKQLSEAKTEE). Disordered regions lie at residues 165–204 (KEEYDQEEERKRKKQLSEAKTEEHPMQANETAKMSNSQGD) and 262–292 (KIKQNQTSEQKGKPAGEVEEMTEKPEMTAEE). Residues 179-189 (QLSEAKTEEHP) are compositionally biased toward basic and acidic residues. A compositionally biased stretch (polar residues) spans 192 to 203 (ANETAKMSNSQG). Ser-201 carries the phosphoserine modification. Residues 271 to 292 (QKGKPAGEVEEMTEKPEMTAEE) show a composition bias toward basic and acidic residues.

Belongs to the CFAP36 family. As to quaternary structure, interacts with ARL3.

It is found in the nucleus. The protein resides in the cytoplasm. The protein localises to the cell projection. It localises to the cilium. Its subcellular location is the flagellum. In terms of biological role, may act as an effector for ARL3. This is Cilia- and flagella-associated protein 36 from Bos taurus (Bovine).